We begin with the raw amino-acid sequence, 376 residues long: Erythronate-4-phosphate dehydrogenase (376 aa).

Substrate-binding residues include Ser-45 and Thr-67. Asp-147 lines the NAD(+) pocket. The active site involves Arg-209. Asp-233 contacts NAD(+). Residue Glu-238 is part of the active site. His-255 acts as the Proton donor in catalysis. An NAD(+)-binding site is contributed by Gly-258. Residue Tyr-259 coordinates substrate.

This sequence belongs to the D-isomer specific 2-hydroxyacid dehydrogenase family. PdxB subfamily. As to quaternary structure, homodimer.

It is found in the cytoplasm. It carries out the reaction 4-phospho-D-erythronate + NAD(+) = (R)-3-hydroxy-2-oxo-4-phosphooxybutanoate + NADH + H(+). It participates in cofactor biosynthesis; pyridoxine 5'-phosphate biosynthesis; pyridoxine 5'-phosphate from D-erythrose 4-phosphate: step 2/5. Catalyzes the oxidation of erythronate-4-phosphate to 3-hydroxy-2-oxo-4-phosphonooxybutanoate. The chain is Erythronate-4-phosphate dehydrogenase from Shewanella sp. (strain ANA-3).